The following is a 185-amino-acid chain: Ribosome-recycling factor (185 aa).

Belongs to the RRF family.

Its subcellular location is the cytoplasm. In terms of biological role, responsible for the release of ribosomes from messenger RNA at the termination of protein biosynthesis. May increase the efficiency of translation by recycling ribosomes from one round of translation to another. The chain is Ribosome-recycling factor from Thermotoga sp. (strain RQ2).